The sequence spans 248 residues: Probable transcriptional regulatory protein blr1534 (248 aa).

The interval M1–K21 is disordered.

It belongs to the TACO1 family.

It is found in the cytoplasm. The sequence is that of Probable transcriptional regulatory protein blr1534 from Bradyrhizobium diazoefficiens (strain JCM 10833 / BCRC 13528 / IAM 13628 / NBRC 14792 / USDA 110).